The sequence spans 260 residues: MIFHANPGVIDLGVNIDHVATLRNARGTVYPDPIQAALQAEEAGADLITLHLREDRRHIRDADVRALRPKLATRMNLECAITSEMLDIACEIKPQDVCLVPEKREEVTTEGGLDVAGHFEQVSAACRQLADAGIRVSLFIDADPDQIAAAAACKAPVIEIHTGRYADAHTAEEQAAEFRRVAAGVEAGQKHGLIVNAGHGLHYTNVQPIAALPGIKELNIGHAIVAHAVFAGWQNAVREMKAIMVAARLGTRYPVPGQPA.

Asparagine 15 serves as a coordination point for 3-amino-2-oxopropyl phosphate. 17-18 (DH) lines the 1-deoxy-D-xylulose 5-phosphate pocket. Arginine 26 contacts 3-amino-2-oxopropyl phosphate. Catalysis depends on histidine 51, which acts as the Proton acceptor. 2 residues coordinate 1-deoxy-D-xylulose 5-phosphate: arginine 53 and histidine 58. Glutamate 78 serves as the catalytic Proton acceptor. Threonine 108 is a binding site for 1-deoxy-D-xylulose 5-phosphate. Histidine 199 serves as the catalytic Proton donor. Residues glycine 200 and 221-222 (GH) each bind 3-amino-2-oxopropyl phosphate.

It belongs to the PNP synthase family. Homooctamer; tetramer of dimers.

The protein localises to the cytoplasm. It catalyses the reaction 3-amino-2-oxopropyl phosphate + 1-deoxy-D-xylulose 5-phosphate = pyridoxine 5'-phosphate + phosphate + 2 H2O + H(+). It functions in the pathway cofactor biosynthesis; pyridoxine 5'-phosphate biosynthesis; pyridoxine 5'-phosphate from D-erythrose 4-phosphate: step 5/5. Catalyzes the complicated ring closure reaction between the two acyclic compounds 1-deoxy-D-xylulose-5-phosphate (DXP) and 3-amino-2-oxopropyl phosphate (1-amino-acetone-3-phosphate or AAP) to form pyridoxine 5'-phosphate (PNP) and inorganic phosphate. The sequence is that of Pyridoxine 5'-phosphate synthase from Cupriavidus metallidurans (strain ATCC 43123 / DSM 2839 / NBRC 102507 / CH34) (Ralstonia metallidurans).